A 130-amino-acid chain; its full sequence is Small ribosomal subunit protein uS8 (130 aa).

The protein belongs to the universal ribosomal protein uS8 family. As to quaternary structure, part of the 30S ribosomal subunit. Contacts proteins S5 and S12.

In terms of biological role, one of the primary rRNA binding proteins, it binds directly to 16S rRNA central domain where it helps coordinate assembly of the platform of the 30S subunit. In Erwinia tasmaniensis (strain DSM 17950 / CFBP 7177 / CIP 109463 / NCPPB 4357 / Et1/99), this protein is Small ribosomal subunit protein uS8.